The sequence spans 229 residues: NADH dehydrogenase [ubiquinone] iron-sulfur protein 8, mitochondrial (229 aa).

Residues 1 to 41 (MAAILARKSLSALRSRQLVLAGHTIEGTNGYNRTLLGTRSF) constitute a mitochondrion transit peptide. 4Fe-4S ferredoxin-type domains lie at 121–150 (RRYATGEERCIACKLCEAICPAQAITIEAE) and 160–189 (TRYDIDMTKCIYCGFCQEACPVDAIVEGPN). Residues Cys-130, Cys-133, Cys-136, Cys-140, Cys-169, Cys-172, Cys-175, and Cys-179 each coordinate [4Fe-4S] cluster.

It belongs to the complex I 23 kDa subunit family. As to quaternary structure, complex I is composed of about 45 different subunits. This is a component of the iron-sulfur (IP) fragment of the enzyme. [4Fe-4S] cluster serves as cofactor. Lowest expression found in storage tissues of tubers. Higher expression in older leaves than younger ones. Highest expression found in flowers.

It localises to the mitochondrion inner membrane. It catalyses the reaction a ubiquinone + NADH + 5 H(+)(in) = a ubiquinol + NAD(+) + 4 H(+)(out). Its function is as follows. Core subunit of the mitochondrial membrane respiratory chain NADH dehydrogenase (Complex I) that is believed to belong to the minimal assembly required for catalysis. Complex I functions in the transfer of electrons from NADH to the respiratory chain. The immediate electron acceptor for the enzyme is believed to be ubiquinone. May donate electrons to ubiquinone. This Solanum tuberosum (Potato) protein is NADH dehydrogenase [ubiquinone] iron-sulfur protein 8, mitochondrial.